Reading from the N-terminus, the 453-residue chain is Cytochrome P450 monooxygenase CYP2 (453 aa).

A helical transmembrane segment spans residues 13-29 (MVITMLHGSSTYSLLAS). Residue Asn85 is glycosylated (N-linked (GlcNAc...) asparagine). Cys397 serves as a coordination point for heme.

Belongs to the cytochrome P450 family. The cofactor is heme.

The protein localises to the membrane. The protein operates within secondary metabolite biosynthesis. Its function is as follows. Cytochrome P450 monooxygenase; part of the gene cluster that mediates the biosynthesis of a tyrosine-derived cytochalasan acting as a fungal signal recognized by resistant rice plants and leads to avirulence in Pi33 resistant rice cultivars. The first step in the pathway is catalyzed by the hybrid PKS-NRPS ACE1, assisted by the enoyl reductase RAP1, that are responsible for fusion of the tyrosine precursor and the polyketide backbone. The polyketide synthase module (PKS) of ACE1 is responsible for the synthesis of the polyketide backbone and the downstream nonribosomal peptide synthetase (NRPS) amidates the carboxyl end of the polyketide with the tyrosine precursor. Because ACE1 lacks a designated enoylreductase (ER) domain, the required activity is provided the enoyl reductase RAP1. Reduction by the hydrolyase ORFZ, followed by dehydration and intra-molecular Diels-Alder cyclization by the Diels-Alderase ORF3 then yield the required isoindolone-fused macrocycle. A number of oxidative steps catalyzed by the tailoring enzymes identified within the cluster, including cytochrome P450 monooxygenases CYP1 to CYP4, the FAD-linked oxidoreductase OXR2 and the short-chain dehydrogenase/reductase OXR1, are further required to afford the final cytochalasans that confer avirulence and which have still to be identified. The monooxygenase CYP1 has been shown to be a site-selective C-18 hydroxylase whereas the function of CYP3 is the site-selective epoxidation of the C-6/C-7 olefin that is present in some intermediate compounds. Finally, SYN2 and RAP2 are not required for avirulence in Pi33 resistant rice cultivars. This chain is Cytochrome P450 monooxygenase CYP2, found in Pyricularia oryzae (strain 70-15 / ATCC MYA-4617 / FGSC 8958) (Rice blast fungus).